A 601-amino-acid polypeptide reads, in one-letter code: MSKAAGSTQTLKNRFRSDYCGLLCPEREHGSVRLAGWVHRKRDHGGLIFIDLRDHTGISQLVIQPEQQELFAKAEQLHVESVICIEGVVVLRAPGAINSRLASGEIEVVVSQITVESNAHPLPFPVADEVVTSEELRLKYRFIDLRREKIHENIIFRSRLTAAIRRYLEEQDFIEIQTPILTSSSPEGARDFLVPSRLHPGKFYALPQAPQQFKQLLMVSGFPRYFQIAPCFRDEDARADRSPGEFYQLDMEMAFIEQNDLFTILEGMIEHLTRTMSHKRITQFPFPRISYKEVMNRFGTDKPDLRIPLEISDVTPLFVGSAFKVFANSTVEGSCVKALVVKGRGNESRLFYDKAEKRAKELGSGGLAYIQFREEGPKGPVVKFLSEADLATLKEHLGLETGDVVFFGAGKWESTCKIMGGMRTYFGDLFTLDKDELSFCWIVDFPMYEYNEEAKKIDFSHNPFSMPQGEMEALETMPPLDILAYQYDIVCNGIELSSGAIRNHKPEIMYKAFGIAGYSREEVDARFGHMIEAFKLGAPPHGGIAPGLDRLVMILCDEQNIREVIAFPMNQQAQDLMMGSPSEVTPVQLKELHLKVELPKK.

An L-aspartate-binding site is contributed by glutamate 187. Positions 211–214 are aspartate; it reads QQFK. Residues arginine 233 and histidine 461 each contribute to the L-aspartate site. An ATP-binding site is contributed by 233–235; that stretch reads RDE. Glutamate 495 serves as a coordination point for ATP. Position 502 (arginine 502) interacts with L-aspartate. Position 547-550 (547-550) interacts with ATP; the sequence is GLDR.

This sequence belongs to the class-II aminoacyl-tRNA synthetase family. Type 1 subfamily. In terms of assembly, homodimer.

The protein localises to the cytoplasm. It carries out the reaction tRNA(Asx) + L-aspartate + ATP = L-aspartyl-tRNA(Asx) + AMP + diphosphate. In terms of biological role, aspartyl-tRNA synthetase with relaxed tRNA specificity since it is able to aspartylate not only its cognate tRNA(Asp) but also tRNA(Asn). Reaction proceeds in two steps: L-aspartate is first activated by ATP to form Asp-AMP and then transferred to the acceptor end of tRNA(Asp/Asn). The sequence is that of Aspartate--tRNA(Asp/Asn) ligase from Pelodictyon phaeoclathratiforme (strain DSM 5477 / BU-1).